The sequence spans 396 residues: Putative cytochrome P450 YjiB (396 aa).

Residue Cys-349 coordinates heme.

The protein belongs to the cytochrome P450 family. It depends on heme as a cofactor.

This chain is Putative cytochrome P450 YjiB (yjiB), found in Bacillus subtilis (strain 168).